A 98-amino-acid chain; its full sequence is Feather keratin 1 (98 aa).

It belongs to the avian keratin family. As to quaternary structure, the avian keratins (F-ker, S-ker, C-ker and B-ker) are a complex mixture of very similar polypeptides.

The sequence is that of Feather keratin 1 from Gallus gallus (Chicken).